The sequence spans 143 residues: Putative pre-16S rRNA nuclease (143 aa).

It belongs to the YqgF nuclease family.

It localises to the cytoplasm. In terms of biological role, could be a nuclease involved in processing of the 5'-end of pre-16S rRNA. This chain is Putative pre-16S rRNA nuclease, found in Lactococcus lactis subsp. cremoris (strain SK11).